The following is a 202-amino-acid chain: MRFYLTKLFAAAGALAWTTGLSTANAVTTPVSPLSRSSDHHQSDDSTQRRLRTLNGADEERMSPLTMTRLRAALAFELELVDFDSLAQNQFLARVREMLGIKVTGSTTAGLPKMIRRFGVKNSAKNVAKRVQDPAKQADLIAGLLIYPVKQRDLLGDELLRKWPYLTVSAIKKRVIAEKNRKVHKKPRPFAAHVHAPTIAAY.

An N-terminal signal peptide occupies residues 1 to 16; sequence MRFYLTKLFAAAGALA. The disordered stretch occupies residues 29–58; that stretch reads TPVSPLSRSSDHHQSDDSTQRRLRTLNGAD. Over residues 37–48 the composition is skewed to basic and acidic residues; the sequence is SSDHHQSDDSTQ. The RxLR-dEER signature appears at 49–61; sequence RRLRTLNGADEER.

Belongs to the RxLR effector family.

The protein resides in the secreted. It is found in the host nucleus. In terms of biological role, secreted effector that completely suppresses the host cell death induced by cell death-inducing proteins. The chain is Secreted RxLR effector protein 93 from Plasmopara viticola (Downy mildew of grapevine).